Here is a 208-residue protein sequence, read N- to C-terminus: Rac-like GTP-binding protein ARAC8 (208 aa).

15–22 (GDGAVGKT) lines the GTP pocket. Positions 37–45 (YIPTVFDNF) match the Effector region motif. GTP is bound by residues 62-66 (DTAGQ) and 120-123 (TKMD). Residues cysteine 199 and cysteine 205 are each lipidated (S-palmitoyl cysteine).

Belongs to the small GTPase superfamily. Rho family. Interacts with ICR1. Binds to SPK1. Although this sequence has a C-terminal -CXXX, it is palmitoylated at Cys-205, rather than prenylated.

It is found in the membrane. Acts as a negative regulator of abscisic acid (ABA) responses. The chain is Rac-like GTP-binding protein ARAC8 (ARAC8) from Arabidopsis thaliana (Mouse-ear cress).